A 212-amino-acid polypeptide reads, in one-letter code: MKLDVIKLDGGKAGSVDLDDAIFGIDEIRGDILQRVVTWQLAKRRSGNHKIQVRNEVSRTSKKMYKQKGTGGARHGSRRAAQFVGGAKAHGPVVRSHAFDLPKKIRALALRHALSSKAKAGSLVVVDSVALTEAKTAALRATFDKIGLKNALVIAGPEVDANFKLAARNIPNVDVLPNAGLNVYDVLRRQTLVLTKDAVEAISARFAEKEAA.

This sequence belongs to the universal ribosomal protein uL4 family. As to quaternary structure, part of the 50S ribosomal subunit.

Functionally, one of the primary rRNA binding proteins, this protein initially binds near the 5'-end of the 23S rRNA. It is important during the early stages of 50S assembly. It makes multiple contacts with different domains of the 23S rRNA in the assembled 50S subunit and ribosome. Its function is as follows. Forms part of the polypeptide exit tunnel. In Caulobacter vibrioides (strain ATCC 19089 / CIP 103742 / CB 15) (Caulobacter crescentus), this protein is Large ribosomal subunit protein uL4.